The chain runs to 119 residues: Large ribosomal subunit protein bL20 (119 aa).

Belongs to the bacterial ribosomal protein bL20 family.

Its function is as follows. Binds directly to 23S ribosomal RNA and is necessary for the in vitro assembly process of the 50S ribosomal subunit. It is not involved in the protein synthesizing functions of that subunit. This Chloroflexus aurantiacus (strain ATCC 29366 / DSM 635 / J-10-fl) protein is Large ribosomal subunit protein bL20.